Here is a 100-residue protein sequence, read N- to C-terminus: ATP synthase subunit c (100 aa).

Helical transmembrane passes span 30-50 (LLYLGAGLAIGLAGLGAGVGM) and 80-100 (AFIETIALYGLLIAFILLFVV).

Belongs to the ATPase C chain family. In terms of assembly, F-type ATPases have 2 components, F(1) - the catalytic core - and F(0) - the membrane proton channel. F(1) has five subunits: alpha(3), beta(3), gamma(1), delta(1), epsilon(1). F(0) has three main subunits: a(1), b(2) and c(10-14). The alpha and beta chains form an alternating ring which encloses part of the gamma chain. F(1) is attached to F(0) by a central stalk formed by the gamma and epsilon chains, while a peripheral stalk is formed by the delta and b chains.

The protein resides in the cell inner membrane. Its function is as follows. F(1)F(0) ATP synthase produces ATP from ADP in the presence of a proton or sodium gradient. F-type ATPases consist of two structural domains, F(1) containing the extramembraneous catalytic core and F(0) containing the membrane proton channel, linked together by a central stalk and a peripheral stalk. During catalysis, ATP synthesis in the catalytic domain of F(1) is coupled via a rotary mechanism of the central stalk subunits to proton translocation. Key component of the F(0) channel; it plays a direct role in translocation across the membrane. A homomeric c-ring of between 10-14 subunits forms the central stalk rotor element with the F(1) delta and epsilon subunits. The sequence is that of ATP synthase subunit c from Aquifex aeolicus (strain VF5).